The following is a 288-amino-acid chain: Histone-lysine N-methyltransferase Suv4-20 (288 aa).

Residues Gln-128–Gly-238 form the SET domain.

This sequence belongs to the class V-like SAM-binding methyltransferase superfamily. Histone-lysine methyltransferase family. Suvar4-20 subfamily.

It is found in the nucleus. Its subcellular location is the chromosome. It catalyses the reaction N(6)-methyl-L-lysyl(20)-[histone H4] + S-adenosyl-L-methionine = N(6),N(6)-dimethyl-L-lysyl(20)-[histone H4] + S-adenosyl-L-homocysteine + H(+). The catalysed reaction is N(6),N(6)-dimethyl-L-lysyl(20)-[histone H4] + S-adenosyl-L-methionine = N(6),N(6),N(6)-trimethyl-L-lysyl(20)-[histone H4] + S-adenosyl-L-homocysteine + H(+). Functionally, histone methyltransferase that specifically di- and trimethylates 'Lys-20' of histone H4 (H4K20me2/me3). H4 'Lys-20' trimethylation represents a specific tag for epigenetic transcriptional repression. Contributes to dosage compensation of X chromosome-relative to autosome-linked gene expression, possibly by converting H4K20me1 to H4K20m2/me3 on autosomes. Involved in the regulation of growth and body fat metabolism downstream of the TOR complex 2 pathway. The polypeptide is Histone-lysine N-methyltransferase Suv4-20 (set-4) (Caenorhabditis elegans).